A 740-amino-acid chain; its full sequence is NAD(P)H-quinone oxidoreductase subunit 5, chloroplastic (740 aa).

16 helical membrane passes run 9 to 29 (WIIP…LILF), 40 to 60 (WAFQ…YLSI), 89 to 109 (IDPL…MVLI), 125 to 145 (FAYM…SNLI), 147 to 167 (IYIF…FWFT), 185 to 205 (GDFG…SFEF), 219 to 239 (NEVN…GAVS), 258 to 278 (TPIS…FLVA), 286 to 306 (VIPY…LLGA), 327 to 347 (LGYM…FHLI), 354 to 374 (ALLF…VGYS), 396 to 416 (ITFL…CFWS), 425 to 445 (WLYS…TAFY), 543 to 563 (LFPI…GIPF), 602 to 622 (VVSV…YKPV), and 717 to 737 (SYLF…YLLF).

This sequence belongs to the complex I subunit 5 family. As to quaternary structure, NDH is composed of at least 16 different subunits, 5 of which are encoded in the nucleus.

It localises to the plastid. Its subcellular location is the chloroplast thylakoid membrane. It catalyses the reaction a plastoquinone + NADH + (n+1) H(+)(in) = a plastoquinol + NAD(+) + n H(+)(out). The enzyme catalyses a plastoquinone + NADPH + (n+1) H(+)(in) = a plastoquinol + NADP(+) + n H(+)(out). In terms of biological role, NDH shuttles electrons from NAD(P)H:plastoquinone, via FMN and iron-sulfur (Fe-S) centers, to quinones in the photosynthetic chain and possibly in a chloroplast respiratory chain. The immediate electron acceptor for the enzyme in this species is believed to be plastoquinone. Couples the redox reaction to proton translocation, and thus conserves the redox energy in a proton gradient. The protein is NAD(P)H-quinone oxidoreductase subunit 5, chloroplastic (ndhF) of Solanum bulbocastanum (Wild potato).